The primary structure comprises 89 residues: Cytochrome c6 (89 aa).

Heme c contacts are provided by C15, C18, H19, and M61.

It belongs to the cytochrome c family. PetJ subfamily. In terms of assembly, monomer. Post-translationally, binds 1 heme c group covalently per subunit.

The protein resides in the plastid. It is found in the chloroplast thylakoid lumen. Its function is as follows. Functions as an electron carrier between membrane-bound cytochrome b6-f and photosystem I in oxygenic photosynthesis. This Tetradesmus obliquus (Green alga) protein is Cytochrome c6 (petJ).